The following is a 165-amino-acid chain: Group 10 secretory phospholipase A2 (165 aa).

Positions 1–31 (MGPLPVCLPIMLLLLLPSLLLLLLLPGPGSG) are cleaved as a signal peptide. Residues 32 to 42 (EASRILRVHRR) constitute a propeptide that is removed on maturation. 8 disulfide bridges follow: C53-C111, C67-C157, C69-C85, C84-C139, C90-C164, C91-C132, C100-C125, and C118-C130. The Ca(2+) site is built by F68, G70, and G72. The active site involves H88. Position 89 (D89) interacts with Ca(2+). N-linked (GlcNAc...) asparagine glycosylation is present at N113. D133 is an active-site residue.

It belongs to the phospholipase A2 family. In terms of assembly, interacts with PLA2R1; this interaction mediates PLA2G10 clearance and inactivation. Ca(2+) is required as a cofactor. Found in spleen, thymus, peripheral blood leukocytes, pancreas, lung, and colon. Expressed in neuronal fibers in dorsal root ganglia and in peripheral tissues including stomach, white adipose tissue and prostate (at protein level).

It localises to the secreted. The protein localises to the lysosome. It is found in the cytoplasmic vesicle. Its subcellular location is the secretory vesicle. The protein resides in the acrosome. It catalyses the reaction a 1,2-diacyl-sn-glycero-3-phosphocholine + H2O = a 1-acyl-sn-glycero-3-phosphocholine + a fatty acid + H(+). The catalysed reaction is 1-hexadecanoyl-2-(9Z-octadecenoyl)-sn-glycero-3-phosphocholine + H2O = 1-hexadecanoyl-sn-glycero-3-phosphocholine + (9Z)-octadecenoate + H(+). It carries out the reaction 1-octadecanoyl-2-(5Z,8Z,11Z,14Z-eicosatetraenoyl)-sn-glycero-3-phosphocholine + H2O = 1-octadecanoyl-sn-glycero-3-phosphocholine + (5Z,8Z,11Z,14Z)-eicosatetraenoate + H(+). The enzyme catalyses 1,2-dihexadecanoyl-sn-glycero-3-phosphocholine + H2O = 1-hexadecanoyl-sn-glycero-3-phosphocholine + hexadecanoate + H(+). It catalyses the reaction 1-hexadecanoyl-2-(9Z-octadecenoyl)-sn-glycero-3-phosphoglycerol + H2O = 1-hexadecanoyl-sn-glycero-3-phosphoglycerol + (9Z)-octadecenoate + H(+). The catalysed reaction is 1,2-dihexadecanoyl-sn-glycero-3-phospho-(1'-sn-glycerol) + H2O = 1-hexadecanoyl-sn-glycero-3-phospho-(1'-sn-glycerol) + hexadecanoate + H(+). It carries out the reaction 1-hexadecanoyl-2-(9Z-octadecenoyl)-sn-glycero-3-phospho-L-serine + H2O = 1-hexadecanoyl-sn-glycero-3-phospho-L-serine + (9Z)-octadecenoate + H(+). The enzyme catalyses 1-hexadecanoyl-2-(9Z,12Z-octadecadienoyl)-sn-glycero-3-phosphoethanolamine + H2O = 1-hexadecanoyl-sn-glycero-3-phosphoethanolamine + (9Z,12Z)-octadecadienoate + H(+). It catalyses the reaction 1-hexadecanoyl-2-(9Z-octadecenoyl)-sn-glycero-3-phosphate + H2O = 1-hexadecanoyl-sn-glycero-3-phosphate + (9Z)-octadecenoate + H(+). The catalysed reaction is 1-O-hexadecyl-2-acetyl-sn-glycero-3-phosphocholine + H2O = 1-O-hexadecyl-sn-glycero-3-phosphocholine + acetate + H(+). With respect to regulation, inhibited by methyl indoxam. In terms of biological role, secretory calcium-dependent phospholipase A2 that primarily targets extracellular phospholipids. Hydrolyzes the ester bond of the fatty acyl group attached at sn-2 position of phospholipids with preference for phosphatidylcholines and phosphatidylglycerols over phosphatidylethanolamines. Preferentially releases sn-2 omega-6 and omega-3 polyunsaturated fatty acyl (PUFA) chains over saturated fatty acyls. Contributes to phospholipid remodeling of very low-density lipoprotein (VLDL), low-density lipoprotein (LDL) and high-density lipoprotein (HDL) particles. Hydrolyzes LDL phospholipids releasing unsaturated fatty acids that regulate macrophage differentiation toward foam cells. Efficiently hydrolyzes and inactivates platelet activating factor (PAF), a potent lipid mediator present in oxidized LDL. May act in an autocrine and paracrine manner. Secreted by lung epithelium, targets membrane phospholipids of infiltrating eosinophils, releasing arachidonate and boosting eicosanoid and cysteinyl leukotriene synthesis involved in airway inflammatory response. Secreted by gut epithelium, hydrolyzes dietary and biliary phosphatidylcholines in the gastrointestinal lumen. Plays a stem cell regulator role in colon epithelium. Within intracellular compartment, mediates Paneth-like cell differentiation and its stem cell supporting functions by inhibiting the Wnt signaling pathway in intestinal stem cell (ISC). Secreted in the intestinal lumen upon inflammation, acts in an autocrine way and promotes prostaglandin E2 synthesis that stimulates Wnt signaling pathway in ISCs and tissue regeneration. May participate in hair follicle morphogenesis by regulating phosphatidylethanolamines metabolism at the outermost epithelial layer and facilitating melanin synthesis. By releasing lysophosphatidylcholines (LPCs) at sperm acrosome, controls sperm cell capacitation, acrosome reaction and overall fertility. May promote neurite outgrowth in neuron fibers involved in nociception. Contributes to lipid remodeling of cellular membranes and generation of lipid mediators involved in pathogen clearance. Cleaves sn-2 fatty acyl chains of phosphatidylglycerols and phosphatidylethanolamines, which are major components of membrane phospholipids in bacteria. Displays bactericidal activity against Gram-positive bacteria by directly hydrolyzing phospholipids of the bacterial membrane. In pulmonary epithelium, may contribute to host defense response against adenoviral infection. Prevents adenovirus entry into host cells by hydrolyzing host cell plasma membrane, releasing C16:0 LPCs that inhibit virus-mediated membrane fusion and viral infection. Likely prevents adenoviral entry into the endosomes of host cells. May play a role in maturation and activation of innate immune cells including macrophages, group 2 innate lymphoid cells and mast cells. The chain is Group 10 secretory phospholipase A2 (PLA2G10) from Homo sapiens (Human).